Consider the following 495-residue polypeptide: EF-hand calcium-binding domain-containing protein 14 (495 aa).

2 disordered regions span residues 1–50 (MKKR…EEEE) and 381–404 (TNKP…FTSK). Phosphoserine is present on Ser-17. Residues 18 to 31 (RRKKPKKGPSSHRL) show a composition bias toward basic residues. Residues 37–50 (PDSDSESSSEEEEE) show a composition bias toward acidic residues. 2 consecutive EF-hand domains span residues 434 to 463 (SSTE…WTSL) and 464 to 495 (GSAM…ALGI). Residues Asp-477, Asp-479, Asp-481, Arg-483, and Glu-488 each contribute to the Ca(2+) site.

The polypeptide is EF-hand calcium-binding domain-containing protein 14 (EFCAB14) (Homo sapiens (Human)).